Consider the following 363-residue polypeptide: Uroporphyrinogen decarboxylase (363 aa).

Substrate contacts are provided by residues 36–40 (RQAGR), Asp85, Tyr160, Ser215, and His339.

This sequence belongs to the uroporphyrinogen decarboxylase family. As to quaternary structure, homodimer.

Its subcellular location is the cytoplasm. It catalyses the reaction uroporphyrinogen III + 4 H(+) = coproporphyrinogen III + 4 CO2. It functions in the pathway porphyrin-containing compound metabolism; protoporphyrin-IX biosynthesis; coproporphyrinogen-III from 5-aminolevulinate: step 4/4. Its function is as follows. Catalyzes the decarboxylation of four acetate groups of uroporphyrinogen-III to yield coproporphyrinogen-III. The protein is Uroporphyrinogen decarboxylase of Saccharopolyspora erythraea (strain ATCC 11635 / DSM 40517 / JCM 4748 / NBRC 13426 / NCIMB 8594 / NRRL 2338).